We begin with the raw amino-acid sequence, 244 residues long: Glutathione S-transferase theta-2B (244 aa).

The GST N-terminal domain occupies 2–82 (GLELFLDLVS…YLSCKYQTPD (81 aa)). Residues 40–41 (HK), 53–54 (KL), 66–67 (ES), and 104–107 (DCIR) each bind glutathione. Residues 88-224 (DLQARARVHE…SILEQAAKKT (137 aa)) enclose the GST C-terminal domain.

It belongs to the GST superfamily. Theta family. As to quaternary structure, homodimer. Expressed at low levels in liver. In lung, expressed at low levels in ciliated bronchiolar cells, alveolar macrophages and alveolar type II cells.

It is found in the cytoplasm. Its subcellular location is the cytosol. The enzyme catalyses RX + glutathione = an S-substituted glutathione + a halide anion + H(+). In terms of biological role, conjugation of reduced glutathione to a wide number of exogenous and endogenous hydrophobic electrophiles. Has a sulfatase activity. The sequence is that of Glutathione S-transferase theta-2B (GSTT2B) from Homo sapiens (Human).